We begin with the raw amino-acid sequence, 130 residues long: Small ribosomal subunit protein uS9 (130 aa).

This sequence belongs to the universal ribosomal protein uS9 family.

This is Small ribosomal subunit protein uS9 from Bordetella parapertussis (strain 12822 / ATCC BAA-587 / NCTC 13253).